A 122-amino-acid polypeptide reads, in one-letter code: Large ribosomal subunit protein uL14 (122 aa).

The protein belongs to the universal ribosomal protein uL14 family. In terms of assembly, part of the 50S ribosomal subunit. Forms a cluster with proteins L3 and L19. In the 70S ribosome, L14 and L19 interact and together make contacts with the 16S rRNA in bridges B5 and B8.

Its function is as follows. Binds to 23S rRNA. Forms part of two intersubunit bridges in the 70S ribosome. The chain is Large ribosomal subunit protein uL14 from Bacillus subtilis (strain 168).